The primary structure comprises 1322 residues: Serine/threonine-protein kinase TIO (1322 aa).

The 251-residue stretch at 6-256 (YHVIELVGEG…WPALREHPFV (251 aa)) folds into the Protein kinase domain. Residues 12-20 (VGEGSFGRV) and Lys-35 contribute to the ATP site. Catalysis depends on Asp-127, which acts as the Proton acceptor. Residues 1000–1322 (CMEDRDLLKA…VIVAKVSGES (323 aa)) are required for the binding to Kinesin-12 members. 6 ARM repeats span residues 1056-1098 (PRLA…DLSR), 1101-1140 (KAFY…NMCR), 1143-1182 (GYFY…NAAY), 1183-1223 (HNDT…NLVR), 1226-1273 (NKLC…LFSL), and 1281-1320 (QICR…KVSG).

It belongs to the protein kinase superfamily. Ser/Thr protein kinase family. As to quaternary structure, interacts with Kinesin-12 members KIN12A/PAKRP1 and KIN12B/PAKRP1L. Interacts with KIN7B/NACK2. As to expression, ubiquitous.

Its subcellular location is the cytoplasm. The protein localises to the cytoskeleton. It localises to the phragmoplast. It catalyses the reaction L-seryl-[protein] + ATP = O-phospho-L-seryl-[protein] + ADP + H(+). The catalysed reaction is L-threonyl-[protein] + ATP = O-phospho-L-threonyl-[protein] + ADP + H(+). Its function is as follows. Plays a role in conventional modes of cytokinesis in meristems and during male gametogenesis but also acts in nonconventional modes of cytokinesis (cellularization) during female gametogenesis. Constitutes a signaling module in association with Kinesin-12 members that is required to support phragmoplast expansion and cell-plate growth in plant cells. This chain is Serine/threonine-protein kinase TIO (TIO), found in Arabidopsis thaliana (Mouse-ear cress).